Here is a 192-residue protein sequence, read N- to C-terminus: Pyridoxal 5'-phosphate synthase subunit PdxT (192 aa).

53-55 (GES) serves as a coordination point for L-glutamine. Catalysis depends on C82, which acts as the Nucleophile. Residues R109 and 137 to 138 (IR) contribute to the L-glutamine site. Residues H173 and E175 each act as charge relay system in the active site.

The protein belongs to the glutaminase PdxT/SNO family. In terms of assembly, in the presence of PdxS, forms a dodecamer of heterodimers. Only shows activity in the heterodimer.

It carries out the reaction aldehydo-D-ribose 5-phosphate + D-glyceraldehyde 3-phosphate + L-glutamine = pyridoxal 5'-phosphate + L-glutamate + phosphate + 3 H2O + H(+). It catalyses the reaction L-glutamine + H2O = L-glutamate + NH4(+). It participates in cofactor biosynthesis; pyridoxal 5'-phosphate biosynthesis. Its function is as follows. Catalyzes the hydrolysis of glutamine to glutamate and ammonia as part of the biosynthesis of pyridoxal 5'-phosphate. The resulting ammonia molecule is channeled to the active site of PdxS. The polypeptide is Pyridoxal 5'-phosphate synthase subunit PdxT (Methanoculleus marisnigri (strain ATCC 35101 / DSM 1498 / JR1)).